A 373-amino-acid chain; its full sequence is Peroxisomal biogenesis factor 3 (373 aa).

The Cytoplasmic portion of the chain corresponds to 1–15 (MLRSVWNFLKRHKKK). The tract at residues 1–45 (MLRSVWNFLKRHKKKCIFLGTVLGGVYILGKYGQKKIREIQEREA) is targeting to peroxisomes. The chain crosses the membrane as a helical span at residues 16-36 (CIFLGTVLGGVYILGKYGQKK). The Peroxisomal portion of the chain corresponds to 37–116 (IREIQEREAA…LKIISFTRST (80 aa)). A helical transmembrane segment spans residues 117–140 (VAVYSTCMLVVLLRVQLNIIGGYI). Residues 120 to 136 (YSTCMLVVLLRVQLNII) are interaction with PEX19. At 141-373 (YLDNAAVGKN…AFSTPQQLEK (233 aa)) the chain is on the cytoplasmic side.

The protein belongs to the peroxin-3 family. Interacts with PEX19. Found in all examined tissues.

It localises to the peroxisome membrane. Involved in peroxisome biosynthesis and integrity. Assembles membrane vesicles before the matrix proteins are translocated. As a docking factor for PEX19, is necessary for the import of peroxisomal membrane proteins in the peroxisomes. The protein is Peroxisomal biogenesis factor 3 (PEX3) of Homo sapiens (Human).